The following is a 233-amino-acid chain: Ribonuclease HII (233 aa).

An RNase H type-2 domain is found at 26–215; it reads QLVAGIDEVG…VRASEGEGLE (190 aa). A divalent metal cation-binding residues include D32, E33, and D124. Positions 211 to 233 are disordered; sequence GEGLETAAGRQSSEGKKGRRPRG.

Belongs to the RNase HII family. Mn(2+) is required as a cofactor. The cofactor is Mg(2+).

The protein localises to the cytoplasm. The catalysed reaction is Endonucleolytic cleavage to 5'-phosphomonoester.. Functionally, endonuclease that specifically degrades the RNA of RNA-DNA hybrids. The sequence is that of Ribonuclease HII from Syntrophobacter fumaroxidans (strain DSM 10017 / MPOB).